Reading from the N-terminus, the 502-residue chain is Glycerol kinase (502 aa).

ADP is bound at residue Thr13. The ATP site is built by Thr13, Thr14, and Ser15. Thr13 lines the sn-glycerol 3-phosphate pocket. ADP is bound at residue Arg17. 4 residues coordinate sn-glycerol 3-phosphate: Arg83, Glu84, Tyr136, and Asp246. Residues Arg83, Glu84, Tyr136, Asp246, and Gln247 each coordinate glycerol. ADP contacts are provided by Thr268 and Gly311. Residues Thr268, Gly311, Gln315, and Gly412 each contribute to the ATP site. ADP-binding residues include Gly412 and Asn416.

It belongs to the FGGY kinase family.

It carries out the reaction glycerol + ATP = sn-glycerol 3-phosphate + ADP + H(+). It functions in the pathway polyol metabolism; glycerol degradation via glycerol kinase pathway; sn-glycerol 3-phosphate from glycerol: step 1/1. With respect to regulation, inhibited by fructose 1,6-bisphosphate (FBP). Its function is as follows. Key enzyme in the regulation of glycerol uptake and metabolism. Catalyzes the phosphorylation of glycerol to yield sn-glycerol 3-phosphate. The protein is Glycerol kinase of Francisella tularensis subsp. tularensis (strain FSC 198).